Here is a 227-residue protein sequence, read N- to C-terminus: MRRLIRVALLTLLLLVAAPYVLTLVYGAGQPVSTLMVWRWLAGATVTRQWVDIERMAPALPRTVVASEDAKFCSHSGIDWDSVRDVLDDLQDGGEASRGGSTITQQVAKNLFLWPGRSVVRKALEFPLAMWIDLVLSKQRILELYLNIAEWGPDGQFGAEAGAAYAFGRSAAQLTPQEAALMASILPNPRVRSAKKPGPGVRRLAATYVARARSAELQQCWRENSGS.

The chain crosses the membrane as a helical span at residues 7–27 (VALLTLLLLVAAPYVLTLVYG).

The protein belongs to the glycosyltransferase 51 family.

Its subcellular location is the cell inner membrane. The enzyme catalyses [GlcNAc-(1-&gt;4)-Mur2Ac(oyl-L-Ala-gamma-D-Glu-L-Lys-D-Ala-D-Ala)](n)-di-trans,octa-cis-undecaprenyl diphosphate + beta-D-GlcNAc-(1-&gt;4)-Mur2Ac(oyl-L-Ala-gamma-D-Glu-L-Lys-D-Ala-D-Ala)-di-trans,octa-cis-undecaprenyl diphosphate = [GlcNAc-(1-&gt;4)-Mur2Ac(oyl-L-Ala-gamma-D-Glu-L-Lys-D-Ala-D-Ala)](n+1)-di-trans,octa-cis-undecaprenyl diphosphate + di-trans,octa-cis-undecaprenyl diphosphate + H(+). It functions in the pathway cell wall biogenesis; peptidoglycan biosynthesis. Its function is as follows. Peptidoglycan polymerase that catalyzes glycan chain elongation from lipid-linked precursors. The sequence is that of Biosynthetic peptidoglycan transglycosylase from Rhodopseudomonas palustris (strain HaA2).